We begin with the raw amino-acid sequence, 172 residues long: MVKFLLLALALGVSCAQHQNLEVSPSEVDGKWHSLYIAADNKSKVSEGGPLRVYVKHLECSDECQTFTIKFYTKVENVCQEHRVVGRKGKDGKYITDFSGQNYFHVVEKADDTMTFHNVNVDDSGKTNVILVVGKGESSSIEQKQRFEKTAEKYDIPKENIEHLVTTDTCNQ.

An N-terminal signal peptide occupies residues 1–15 (MVKFLLLALALGVSC). The N-linked (GlcNAc...) asparagine glycan is linked to Asn-41. 2 disulfides stabilise this stretch: Cys-60/Cys-64 and Cys-79/Cys-170.

The protein belongs to the calycin superfamily. Lipocalin family. In terms of processing, N-glycosylated. As to expression, expressed in acinar cells of the submandibular salivary gland from where it is secreted into saliva (at protein level). Also released from the submandibular salivary gland into blood and excreted in urine (at protein level). Expressed in the lacrimal gland from where it is secreted into tears (at protein level).

It is found in the secreted. The protein localises to the cytoplasm. This is Male-specific submandibular salivary gland protein from Mesocricetus auratus (Golden hamster).